A 799-amino-acid polypeptide reads, in one-letter code: ATP-dependent DNA helicase Hel308 (799 aa).

Residues Q29 and 47-54 (IPTASGKT) each bind ATP. Residues 34-200 (EAGVTEGENL…WLDAGLVDSD (167 aa)) form the Helicase ATP-binding domain. A DEAH box motif is present at residues 145–148 (DEVH). The region spanning 234–435 (QTAAIVRDTL…EPALRTHILA (202 aa)) is the Helicase C-terminal domain. Disordered stretches follow at residues 522-566 (RGAS…DRDP) and 750-799 (NVLE…LGDF). Acidic residues predominate over residues 553–566 (LAEDADESDADRDP).

It belongs to the helicase family. Hel308 subfamily. Monomer.

The enzyme catalyses Couples ATP hydrolysis with the unwinding of duplex DNA by translocating in the 3'-5' direction.. The catalysed reaction is ATP + H2O = ADP + phosphate + H(+). In terms of biological role, DNA-dependent ATPase and 3'-5' DNA helicase that may be involved in repair of stalled replication forks. The chain is ATP-dependent DNA helicase Hel308 from Haloarcula marismortui (strain ATCC 43049 / DSM 3752 / JCM 8966 / VKM B-1809) (Halobacterium marismortui).